The following is a 125-amino-acid chain: Large ribosomal subunit protein bL12 (125 aa).

This sequence belongs to the bacterial ribosomal protein bL12 family. As to quaternary structure, homodimer. Part of the ribosomal stalk of the 50S ribosomal subunit. Forms a multimeric L10(L12)X complex, where L10 forms an elongated spine to which 2 to 4 L12 dimers bind in a sequential fashion. Binds GTP-bound translation factors.

Functionally, forms part of the ribosomal stalk which helps the ribosome interact with GTP-bound translation factors. Is thus essential for accurate translation. The chain is Large ribosomal subunit protein bL12 from Methylorubrum extorquens (strain CM4 / NCIMB 13688) (Methylobacterium extorquens).